The primary structure comprises 416 residues: Serine hydroxymethyltransferase 1 (416 aa).

(6S)-5,6,7,8-tetrahydrofolate contacts are provided by residues L121 and 125-127 (GHL). K229 bears the N6-(pyridoxal phosphate)lysine mark. Residues E245 and 354–356 (SPF) each bind (6S)-5,6,7,8-tetrahydrofolate.

The protein belongs to the SHMT family. As to quaternary structure, homodimer. Pyridoxal 5'-phosphate is required as a cofactor.

The protein localises to the cytoplasm. The catalysed reaction is (6R)-5,10-methylene-5,6,7,8-tetrahydrofolate + glycine + H2O = (6S)-5,6,7,8-tetrahydrofolate + L-serine. It functions in the pathway one-carbon metabolism; tetrahydrofolate interconversion. It participates in amino-acid biosynthesis; glycine biosynthesis; glycine from L-serine: step 1/1. Its function is as follows. Catalyzes the reversible interconversion of serine and glycine with tetrahydrofolate (THF) serving as the one-carbon carrier. This reaction serves as the major source of one-carbon groups required for the biosynthesis of purines, thymidylate, methionine, and other important biomolecules. Also exhibits THF-independent aldolase activity toward beta-hydroxyamino acids, producing glycine and aldehydes, via a retro-aldol mechanism. The polypeptide is Serine hydroxymethyltransferase 1 (Vibrio cholerae serotype O1 (strain ATCC 39315 / El Tor Inaba N16961)).